The following is a 1194-amino-acid chain: ATP-dependent RNA helicase DHX30 (1194 aa).

Basic and acidic residues predominate over residues 1 to 10; the sequence is MFSLDSFRKD. The tract at residues 1 to 27 is disordered; that stretch reads MFSLDSFRKDRAQHRQRQCKLPPPRLP. Phosphoserine occurs at positions 6 and 15. The region spanning 53 to 121 is the DRBM domain; it reads PKNLLNSVIG…QAAAAACQLF (69 aa). Positions 150 to 199 are disordered; it reads ADSWWRPEPTMPPTSWRQLNPESIRPGGPGGLSRSLGREEEEDEEEELEE. Acidic residues predominate over residues 188-199; sequence EEEEDEEEELEE. Phosphoserine occurs at positions 226 and 380. A Helicase ATP-binding domain is found at 444 to 612; the sequence is LNAIEQHPVV…FGGCPVIKVP (169 aa). 457–464 serves as a coordination point for ATP; the sequence is GDTGCGKT. The DEAH box motif lies at 559 to 562; sequence DEVH. The Helicase C-terminal domain occupies 654–827; sequence LVTDLVLHID…NLVLQAKIHM (174 aa).

The protein belongs to the DEAD box helicase family. DEAH subfamily. As to quaternary structure, identified in a complex with TFAM and SSBP1. Interacts with AGO1 and AGO2. Interacts (via N-terminus) with ZC3HAV1 (via N-terminal domain) in an RNA-independent manner. Found in a complex with GRSF1, DDX28, FASTKD2 and FASTKD5. Phosphorylated on Ser-15.

The protein localises to the cytoplasm. The protein resides in the mitochondrion. It localises to the mitochondrion matrix. Its subcellular location is the mitochondrion nucleoid. It catalyses the reaction ATP + H2O = ADP + phosphate + H(+). Its function is as follows. RNA-dependent helicase. Plays an important role in the assembly of the mitochondrial large ribosomal subunit. Required for optimal function of the zinc-finger antiviral protein ZC3HAV1. Associates with mitochondrial DNA. Involved in nervous system development and differentiation through its involvement in the up-regulation of a number of genes which are required for neurogenesis, including GSC, NCAM1, neurogenin, and NEUROD. In Homo sapiens (Human), this protein is ATP-dependent RNA helicase DHX30 (DHX30).